The primary structure comprises 447 residues: MTRLFGTDGVRGLANRKLTALLALKLGAAAAEVLTKDNRSTSRRPVAVVGRDPRVSGEMLAAALSAGMASRGVDVLRVGVLPTPAVAYLTDFYGADMGVVISASHNPMPDNGIKFFSKGGHKLPDSVEDEIEKVMETIPDGGPTGHGIGRVIEEAVDAQETYLKHLKGAVPRSLEGITVVVDCANGAASEVAPLAYAAAGAKVIPIHNHPNAYNINDSCGSTHIDQVQAAVLEHGADLGLAHDGDADRCLAVDAEGNVVDGDQIMAILALAMKENGELHKSTLVATVMSNLGLRLAMKEAGIELRTTKVGDRYVLEELNAGGFSLGGEQSGHIVLPDHGTTGDGTLTGLSLMSRMAETGLSLKVLASAMTVLPQVLINVPVSDKTIIQTHPDVVAAMERASDELGEDGRVLLRPSGTEELFRVMVEAPSKETARRIAADLASVVAKI.

The active-site Phosphoserine intermediate is the Ser104. Positions 104, 243, 245, and 247 each coordinate Mg(2+). Ser104 is modified (phosphoserine).

Belongs to the phosphohexose mutase family. The cofactor is Mg(2+). In terms of processing, activated by phosphorylation.

The enzyme catalyses alpha-D-glucosamine 1-phosphate = D-glucosamine 6-phosphate. Catalyzes the conversion of glucosamine-6-phosphate to glucosamine-1-phosphate. This is Phosphoglucosamine mutase from Corynebacterium diphtheriae (strain ATCC 700971 / NCTC 13129 / Biotype gravis).